Here is a 299-residue protein sequence, read N- to C-terminus: Coenzyme PQQ synthesis protein B (299 aa).

Belongs to the PqqB family.

Its pathway is cofactor biosynthesis; pyrroloquinoline quinone biosynthesis. In terms of biological role, may be involved in the transport of PQQ or its precursor to the periplasm. This is Coenzyme PQQ synthesis protein B from Methylorubrum extorquens (strain ATCC 14718 / DSM 1338 / JCM 2805 / NCIMB 9133 / AM1) (Methylobacterium extorquens).